The sequence spans 908 residues: Vacuolar membrane protease (908 aa).

Residues 1–25 are disordered; it reads MTSGEEEEGTREQVPVSQPTGTTSI. At 1–48 the chain is on the cytoplasmic side; that stretch reads MTSGEEEEGTREQVPVSQPTGTTSIVSTKEKQPNIFIRAIRATFGYRK. A compositionally biased stretch (polar residues) spans 15 to 25; the sequence is PVSQPTGTTSI. Residues 49 to 69 traverse the membrane as a helical segment; that stretch reads TSLTLFVLLTIFFTVAFSSYD. The Vacuolar portion of the chain corresponds to 70-381; it reads NSLDFTIDLP…FSTSVTTLNT (312 aa). Residues Asn-143 and Asn-162 are each glycosylated (N-linked (GlcNAc...) asparagine). Zn(2+)-binding residues include His-176 and Asp-188. The active-site Proton acceptor is the Glu-221. Glu-222, Glu-247, and His-319 together coordinate Zn(2+). An N-linked (GlcNAc...) asparagine glycan is attached at Asn-354. The helical transmembrane segment at 382-402 threads the bilayer; it reads INMVLIVLFPVLSGPLLFITV. Residues 403 to 411 are Cytoplasmic-facing; the sequence is RYKKWNIGT. The helical transmembrane segment at 412 to 432 threads the bilayer; the sequence is ANLFSLPLAIVITSLVGAVVV. Residues 433–449 lie on the Vacuolar side of the membrane; the sequence is NQGFRLVNEFLPASRPM. The helical transmembrane segment at 450 to 470 threads the bilayer; it reads LLVTTTTSILLLTYYILLNGI. Residues 471–480 lie on the Cytoplasmic side of the membrane; sequence NFVSPSGDQK. The helical transmembrane segment at 481 to 501 threads the bilayer; it reads LVSIIQISFIYWIALIFVTRG. Over 502-514 the chain is Vacuolar; sequence LSQNAIGDDHTGE. A helical membrane pass occupies residues 515–535; sequence FAFTILFLLEATASLFGLIGW. At 536–602 the chain is on the cytoplasmic side; that stretch reads TFTRSVKEPT…MQHFGYDWSL (67 aa). The tract at residues 543–584 is disordered; it reads EPTGDEEPLLNGRMERYVDGSDDEDDVEEEDDEDQSEEENHQ. The segment covering 562–579 has biased composition (acidic residues); sequence GSDDEDDVEEEDDEDQSE. Residues 603 to 623 form a helical membrane-spanning segment; the sequence is QFLLIVPISSLVIYNSGWLVI. Residues 624 to 638 lie on the Vacuolar side of the membrane; the sequence is DGINKSIQESLVAEN. Asn-627 carries N-linked (GlcNAc...) asparagine glycosylation. A helical transmembrane segment spans residues 639–659; it reads FIYLIIQLFSQFWILPILPFV. The Cytoplasmic portion of the chain corresponds to 660-664; sequence YKLNR. Residues 665–685 traverse the membrane as a helical segment; it reads FMVLGLIAFALVGVTLISSVD. The Vacuolar portion of the chain corresponds to 686–908; that stretch reads PFNQDNPLKL…LVSLTNRIEV (223 aa). N-linked (GlcNAc...) asparagine glycans are attached at residues Asn-752 and Asn-764.

This sequence belongs to the peptidase M28 family. It depends on Zn(2+) as a cofactor.

The protein localises to the vacuole membrane. Functionally, may be involved in vacuolar sorting and osmoregulation. The sequence is that of Vacuolar membrane protease from Candida tropicalis (strain ATCC MYA-3404 / T1) (Yeast).